A 665-amino-acid chain; its full sequence is GRB2-associated-binding protein 2 (665 aa).

Phosphoserine is present on Ser2. In terms of domain architecture, PH spans 8–119 (DVVCTGWLRK…WVQSICQICG (112 aa)). A disordered region spans residues 131–183 (RNLSSASHGPRSSPAEFSSSQHLLRERKSSAPSHSSQPTLFTFEPPMTSHMQP). A phosphoserine mark is found at Ser135, Ser142, Ser143, Ser149, Ser150, Ser160, Ser165, Ser211, Ser220, and Ser261. Positions 160–170 (SAPSHSSQPTL) are enriched in polar residues. Residue Thr262 is modified to Phosphothreonine. Tyr263 bears the Phosphotyrosine mark. Phosphothreonine is present on Thr275. Ser278 and Ser282 each carry phosphoserine. A Phosphothreonine modification is found at Thr284. A Phosphotyrosine modification is found at Tyr290. Thr328 carries the phosphothreonine modification. 2 disordered regions span residues 340–442 (TSGD…ENYV) and 491–517 (PSRGSEIQPPPVNRNLKPDRKAKPTPL). The short motif at 348 to 355 (PPPRPPKP) is the SH3-binding element. The residue at position 365 (Ser365) is a Phosphoserine. Residues Thr382 and Thr388 each carry the phosphothreonine modification. Ser402 is subject to Phosphoserine. Thr405 bears the Phosphothreonine mark. The span at 412 to 423 (GSGESASWSAES) shows a compositional bias: low complexity. A phosphoserine mark is found at Ser420 and Ser423. At Tyr441 the chain carries Phosphotyrosine. Positions 499–508 (PPPVNRNLKP) match the SH3-binding motif. Ser532 carries the phosphoserine modification. Composition is skewed to polar residues over residues 548–566 (SSSQYCRPISTQSITSTDS) and 578–600 (NPVSASPVPSGTNSPAPRKSTGS). The segment at 548 to 631 (SSSQYCRPIS…SSVTSDEKVD (84 aa)) is disordered. Ser612 is modified (phosphoserine). At Tyr632 the chain carries Phosphotyrosine. Residues 646–659 (TMQEWTDVRQSSEP) are compositionally biased toward polar residues. The disordered stretch occupies residues 646 to 665 (TMQEWTDVRQSSEPSKGAKL).

It belongs to the GAB family. In terms of assembly, part of a complex composed of EEIG1, TNFRSF11A/RANK, PLCG2, GAB2, TEC and BTK; complex formation increases in the presence of TNFSF11/RANKL. Interacts with HCK. Interacts with SHC1; may mediate interaction with receptors. Interacts with SYK. Interacts with PI-3 kinase. Interacts with GRB2 (via SH3 2 domain). Interacts (phosphorylated) with PTPN11. Interacts with TNFRSF11A (via cytoplasmic domain). Interacts (phosphorylated) with 14-3-3 family proteins SFN, YWHAB, YWHAE, YWHAG, YWHAH, YWHAQ and YWHAZ; prevents interaction with GRB2 and attenuates GAB2 signaling. In terms of processing, phosphorylated upon EGF stimulation. Phosphorylated on tyrosine residues by HCK upon IL6 signaling. Phosphorylated on tyrosine residue(s) by the thrombopoietin receptor (TPOR), stem cell factor receptor (SCFR), and T-cell and B-cell antigen receptors, gp130, IL-2R and IL-3R. Phosphorylated upon stimulation of TNFRSF11A/RANK by TNFSF11/RANKL. Post-translationally, dephosphorylated by PTPN11.

The protein resides in the cytoplasm. The protein localises to the cell membrane. It is found in the membrane raft. Its function is as follows. Adapter protein which acts downstream of several membrane receptors including cytokine, antigen, hormone, cell matrix and growth factor receptors to regulate multiple signaling pathways. Regulates osteoclast differentiation mediating the TNFRSF11A/RANK signaling. In allergic response, it plays a role in mast cells activation and degranulation through PI-3-kinase regulation. Also involved in the regulation of cell proliferation and hematopoiesis. This Rattus norvegicus (Rat) protein is GRB2-associated-binding protein 2 (Gab2).